The primary structure comprises 134 residues: Small ribosomal subunit protein uS8 (134 aa).

It belongs to the universal ribosomal protein uS8 family. In terms of assembly, part of the 30S ribosomal subunit. Contacts proteins S5 and S12.

Functionally, one of the primary rRNA binding proteins, it binds directly to 16S rRNA central domain where it helps coordinate assembly of the platform of the 30S subunit. This chain is Small ribosomal subunit protein uS8, found in Thermotoga neapolitana (strain ATCC 49049 / DSM 4359 / NBRC 107923 / NS-E).